Here is a 364-residue protein sequence, read N- to C-terminus: FMNH(2)-dependent dimethylsulfone monooxygenase (364 aa).

It belongs to the SsuD family.

The catalysed reaction is dimethyl sulfone + FMNH2 + O2 = methanesulfinate + FMN + formaldehyde + H2O + 2 H(+). Its function is as follows. Involved in the dimethyl sulfide degradation pathway. Catalyzes the oxidation of dimethylsulfone (DMSO2) to yield methanesulfinate, which is oxidized spontaneously to methanesulfonate in the presence of dioxygen and FMNH(2). This chain is FMNH(2)-dependent dimethylsulfone monooxygenase, found in Pseudomonas fluorescens (strain Pf0-1).